A 68-amino-acid chain; its full sequence is Protein P34 (68 aa).

2 consecutive transmembrane segments (helical) span residues 4-24 (FVGP…LAVL) and 41-61 (GFSS…GFAM).

The protein localises to the virion membrane. The polypeptide is Protein P34 (XXXIV) (Acinetobacter calcoaceticus (Arthrobacter siderocapsulatus)).